Consider the following 342-residue polypeptide: tRNA N6-adenosine threonylcarbamoyltransferase (342 aa).

The Fe cation site is built by His114 and His118. Residues 136–140, Asp169, Gly182, Asp186, and Asn275 each bind substrate; that span reads LVSGG. Asp301 contacts Fe cation.

The protein belongs to the KAE1 / TsaD family. Fe(2+) serves as cofactor.

The protein resides in the cytoplasm. It catalyses the reaction L-threonylcarbamoyladenylate + adenosine(37) in tRNA = N(6)-L-threonylcarbamoyladenosine(37) in tRNA + AMP + H(+). Its function is as follows. Required for the formation of a threonylcarbamoyl group on adenosine at position 37 (t(6)A37) in tRNAs that read codons beginning with adenine. Is involved in the transfer of the threonylcarbamoyl moiety of threonylcarbamoyl-AMP (TC-AMP) to the N6 group of A37, together with TsaE and TsaB. TsaD likely plays a direct catalytic role in this reaction. In Streptococcus pyogenes serotype M3 (strain ATCC BAA-595 / MGAS315), this protein is tRNA N6-adenosine threonylcarbamoyltransferase.